Consider the following 744-residue polypeptide: Collagen alpha-1(VIII) chain (744 aa).

The signal sequence occupies residues 1–27 (MAVLPGPLQLLGVLLTISLSSIRLIQA). Positions 29–117 (AYYGIKPLPP…GKEIPLASLR (89 aa)) are nonhelical region (NC2). 2 disordered regions span residues 115 to 393 (SLRG…GEPG) and 459 to 589 (GPKG…PDMG). The interval 118–571 (GEQGPRGEPG…PGPPGPPGPP (454 aa)) is triple-helical region (COL1). The segment covering 128-137 (PRGPPGPPGL) has biased composition (pro residues). A compositionally biased stretch (low complexity) spans 168–178 (KPGAMGMPGAK). 2 stretches are compositionally biased toward gly residues: residues 203–217 (GLPG…GLPG) and 328–337 (GFPGGKGEQG). Low complexity-rich tracts occupy residues 466-496 (QKGV…LQGP) and 538-556 (AGLH…QGQP). Residues 558–581 (LPGPPGPPGPPGPPAVMPPTPPPQ) show a composition bias toward pro residues. Residues 572-744 (AVMPPTPPPQ…SFSGYLLYPM (173 aa)) form a nonhelical region (NC1) region. Positions 611–744 (PAYEMPAFTA…SFSGYLLYPM (134 aa)) constitute a C1q domain.

As to quaternary structure, homotrimers, or heterotrimers in association with alpha 2(VIII) type collagens. Four homotrimers can form a tetrahedron stabilized by central interacting C-terminal NC1 trimers. In terms of processing, prolines at the third position of the tripeptide repeating unit (G-X-Y) are hydroxylated in some or all of the chains. Post-translationally, proteolytically cleaved by neutrophil elastase, in vitro. Proteolytic processing produces the C-terminal NC1 domain fragment, vastatin. In terms of tissue distribution, expressed primarily in the subendothelium of large blood vessels. Also expressed in arterioles and venules in muscle, heart, kidney, spleen, umbilical cord, liver and lung and is also found in connective tissue layers around hair follicles, around nerve bundles in muscle, in the dura of the optic nerve, in cornea and sclera, and in the perichondrium of cartilaginous tissues. In the kidney, expressed in mesangial cells, glomerular endothelial cells, and tubular epithelial cells. Also expressed in mast cells, and in astrocytes during the repair process. Expressed in Descemet's membrane. Specifically expressed in peritoneal fibroblasts and mesothelial cells.

It localises to the secreted. The protein localises to the extracellular space. The protein resides in the extracellular matrix. Its subcellular location is the basement membrane. Its function is as follows. Macromolecular component of the subendothelium. Major component of the Descemet's membrane (basement membrane) of corneal endothelial cells. Also a component of the endothelia of blood vessels. Necessary for migration and proliferation of vascular smooth muscle cells and thus, has a potential role in the maintenance of vessel wall integrity and structure, in particular in atherogenesis. Vastatin, the C-terminal fragment comprising the NC1 domain, inhibits aortic endothelial cell proliferation and causes cell apoptosis. The polypeptide is Collagen alpha-1(VIII) chain (COL8A1) (Homo sapiens (Human)).